The primary structure comprises 537 residues: Copine-1 (537 aa).

C2 domains follow at residues 1–114 (MAHC…TLPL) and 123–245 (GRGT…ECIH). Ca(2+) contacts are provided by aspartate 21, aspartate 27, aspartate 80, aspartate 82, aspartate 92, aspartate 153, and aspartate 159. N6-acetyllysine is present on lysine 171. Ca(2+)-binding residues include aspartate 214, aspartate 216, and aspartate 222. The VWFA domain occupies 285 to 505 (NFTVGVDFTG…ALAQTVLAEV (221 aa)).

It belongs to the copine family. As to quaternary structure, homodimer; homodimerizes via its C2 domains. Interacts with p65/RELA (via N-terminus); this interaction induces proteolytic cleavage of p65/RELA subunit and inhibition of NF-kappa-B transcriptional activity. Interacts (via VWFA domain) with ACTB, CCDC22, MYCBP2, PPP5C, RDX and UBE2O. It depends on Ca(2+) as a cofactor. Expressed in liver, spleen, muscle, testis, adrenal (at protein level).

The protein resides in the nucleus. It localises to the cytoplasm. Its subcellular location is the cell membrane. Functionally, calcium-dependent phospholipid-binding protein that plays a role in calcium-mediated intracellular processes. Involved in the TNF-alpha receptor signaling pathway in a calcium-dependent manner. Exhibits calcium-dependent phospholipid binding properties. Plays a role in neuronal progenitor cell differentiation; induces neurite outgrowth via a AKT-dependent signaling cascade and calcium-independent manner. May recruit target proteins to the cell membrane in a calcium-dependent manner. May function in membrane trafficking. Involved in TNF-alpha-induced NF-kappa-B transcriptional repression by inducing endoprotease processing of the transcription factor NF-kappa-B p65/RELA subunit. Also induces endoprotease processing of NF-kappa-B p50/NFKB1, p52/NFKB2, RELB and REL. This chain is Copine-1, found in Bos taurus (Bovine).